Reading from the N-terminus, the 415-residue chain is Homoserine O-succinyltransferase (415 aa).

An AB hydrolase-1 domain is found at 69–383 (NAVLVCHALN…PHGHDAFLLD (315 aa)). Serine 175 acts as the Nucleophile in catalysis. Arginine 245 provides a ligand contact to substrate. Catalysis depends on residues aspartate 344 and histidine 377. Aspartate 378 serves as a coordination point for substrate.

Belongs to the AB hydrolase superfamily. MetX family. In terms of assembly, homodimer.

It localises to the cytoplasm. It catalyses the reaction L-homoserine + succinyl-CoA = O-succinyl-L-homoserine + CoA. It participates in amino-acid biosynthesis; L-methionine biosynthesis via de novo pathway; O-succinyl-L-homoserine from L-homoserine: step 1/1. In terms of biological role, transfers a succinyl group from succinyl-CoA to L-homoserine, forming succinyl-L-homoserine. This chain is Homoserine O-succinyltransferase, found in Bordetella pertussis (strain Tohama I / ATCC BAA-589 / NCTC 13251).